The following is a 585-amino-acid chain: Putative sulfur deprivation response regulator (585 aa).

The next 5 helical transmembrane spans lie at 5 to 25, 30 to 50, 83 to 103, 117 to 137, and 162 to 182; these read VVDA…RGII, AFAG…MIAA, VASV…IPVV, FMMP…IGTS, and IIGL…SPLL. RCK C-terminal domains lie at 189–274 and 288–372; these read MMAA…LPGL and ETVA…STEW. Helical transmembrane passes span 389–409, 411–431, 442–462, 482–502, and 561–581; these read LALF…SMDV, PLST…VLTV, ILLT…TGLA, VAAI…GAAV, and FGLP…VLYF.

Belongs to the CitM (TC 2.A.11) transporter family.

It localises to the membrane. In terms of biological role, not known; mutations in SAC1 produces cells that cannot synthesize arylsulfatase and cannot take up sulfate as rapidly as wild-type cells. SAC1 is necessary for cells to survive sulfur deprivation. The polypeptide is Putative sulfur deprivation response regulator (SAC1) (Chlamydomonas reinhardtii (Chlamydomonas smithii)).